A 256-amino-acid chain; its full sequence is Small ribosomal subunit protein eS1 (256 aa).

The span at 1–18 (MAVGKNKRLSKGKKGLKK) shows a compositional bias: basic residues. Residues 1–20 (MAVGKNKRLSKGKKGLKKKA) are disordered. At A2 the chain carries N-acetylalanine; partial.

Belongs to the eukaryotic ribosomal protein eS1 family. In terms of assembly, component of the small ribosomal subunit. Mature ribosomes consist of a small (40S) and a large (60S) subunit. The 40S subunit contains about 33 different proteins and 1 molecule of RNA (18S). The 60S subunit contains about 49 different proteins and 3 molecules of RNA (25S, 5.8S and 5S).

It localises to the cytoplasm. This is Small ribosomal subunit protein eS1 from Chaetomium globosum (strain ATCC 6205 / CBS 148.51 / DSM 1962 / NBRC 6347 / NRRL 1970) (Soil fungus).